A 387-amino-acid polypeptide reads, in one-letter code: Monopolar spindle protein 2 (387 aa).

The stretch at 117 to 232 (MNLNSPSKFL…NSSRTSDPGS (116 aa)) forms a coiled coil. Residues 216 to 235 (RQVEDNQNSSRTSDPGSPLV) form a disordered region. The span at 220 to 230 (DNQNSSRTSDP) shows a compositional bias: polar residues. The helical transmembrane segment at 311 to 327 (IRIIVCFALLAGVLPYI) threads the bilayer.

Belongs to the MPS2 family. In terms of assembly, interacts with BBP1, MPS3, and SPC24.

The protein resides in the nucleus membrane. Its subcellular location is the cytoplasm. It localises to the cytoskeleton. It is found in the microtubule organizing center. The protein localises to the spindle pole body. In terms of biological role, component of the spindle pole body (SPB) required for insertion of the nascent SPB into the nuclear envelope and for the proper execution of spindle pole body (SPB) duplication. The sequence is that of Monopolar spindle protein 2 (MPS2) from Saccharomyces cerevisiae (strain ATCC 204508 / S288c) (Baker's yeast).